The chain runs to 211 residues: NADH-quinone oxidoreductase subunit I (211 aa).

Residues 1-27 are disordered; it reads MANTDRPALPHKRAVPPSRADSGPRRR. 4Fe-4S ferredoxin-type domains follow at residues 71–101 and 117–146; these read LNRYPDGLEKCIGCELCAWACPADAIYVEGA and RVYQINYLRCIGCGLCIEACPTRALTMTYD. 8 residues coordinate [4Fe-4S] cluster: cysteine 81, cysteine 84, cysteine 87, cysteine 91, cysteine 126, cysteine 129, cysteine 132, and cysteine 136.

Belongs to the complex I 23 kDa subunit family. NDH-1 is composed of 14 different subunits. Subunits NuoA, H, J, K, L, M, N constitute the membrane sector of the complex. The cofactor is [4Fe-4S] cluster.

The protein localises to the cell membrane. The enzyme catalyses a quinone + NADH + 5 H(+)(in) = a quinol + NAD(+) + 4 H(+)(out). Its function is as follows. NDH-1 shuttles electrons from NADH, via FMN and iron-sulfur (Fe-S) centers, to quinones in the respiratory chain. The immediate electron acceptor for the enzyme in this species is believed to be menaquinone. Couples the redox reaction to proton translocation (for every two electrons transferred, four hydrogen ions are translocated across the cytoplasmic membrane), and thus conserves the redox energy in a proton gradient. This chain is NADH-quinone oxidoreductase subunit I, found in Mycobacterium bovis (strain ATCC BAA-935 / AF2122/97).